The primary structure comprises 395 residues: Elongation factor Tu (395 aa).

Residues L10–Q204 enclose the tr-type G domain. The interval G19–T26 is G1. GTP is bound at residue G19 to T26. A Mg(2+)-binding site is contributed by T26. Residues G60–N64 form a G2 region. The segment at D81–G84 is G3. Residues D81–H85 and N136–D139 contribute to the GTP site. Residues N136 to D139 form a G4 region. The tract at residues S174–L176 is G5.

This sequence belongs to the TRAFAC class translation factor GTPase superfamily. Classic translation factor GTPase family. EF-Tu/EF-1A subfamily. In terms of assembly, monomer.

Its subcellular location is the cytoplasm. The catalysed reaction is GTP + H2O = GDP + phosphate + H(+). Its function is as follows. GTP hydrolase that promotes the GTP-dependent binding of aminoacyl-tRNA to the A-site of ribosomes during protein biosynthesis. This Mycoplasma capricolum subsp. capricolum (strain California kid / ATCC 27343 / NCTC 10154) protein is Elongation factor Tu.